The primary structure comprises 512 residues: Lysine--tRNA ligase (512 aa).

The Mg(2+) site is built by Glu-408 and Glu-415.

This sequence belongs to the class-II aminoacyl-tRNA synthetase family. Homodimer. Mg(2+) is required as a cofactor.

The protein localises to the cytoplasm. It catalyses the reaction tRNA(Lys) + L-lysine + ATP = L-lysyl-tRNA(Lys) + AMP + diphosphate. This Prochlorococcus marinus (strain MIT 9215) protein is Lysine--tRNA ligase.